A 377-amino-acid polypeptide reads, in one-letter code: D-alanine--D-alanine ligase (377 aa).

An ATP-grasp domain is found at 140–349; the sequence is KELLTVNGIR…NAKLVDMLID (210 aa). ATP is bound at residue 170–225; it reads VAELGNIVFVKAANQGSSVGISRVTNAEEYTEALSDSFQYDYKVLIEEAVNGAREL. Mg(2+) is bound by residues D303, E316, and N318.

Belongs to the D-alanine--D-alanine ligase family. Mg(2+) serves as cofactor. Requires Mn(2+) as cofactor.

The protein localises to the cytoplasm. It carries out the reaction 2 D-alanine + ATP = D-alanyl-D-alanine + ADP + phosphate + H(+). It participates in cell wall biogenesis; peptidoglycan biosynthesis. Functionally, cell wall formation. This Leuconostoc mesenteroides protein is D-alanine--D-alanine ligase.